The chain runs to 371 residues: Putative glutamate--cysteine ligase 2 (371 aa).

This sequence belongs to the glutamate--cysteine ligase type 2 family. YbdK subfamily. As to quaternary structure, homodimer.

It catalyses the reaction L-cysteine + L-glutamate + ATP = gamma-L-glutamyl-L-cysteine + ADP + phosphate + H(+). Its function is as follows. ATP-dependent carboxylate-amine ligase which exhibits weak glutamate--cysteine ligase activity. The chain is Putative glutamate--cysteine ligase 2 from Cronobacter sakazakii (strain ATCC BAA-894) (Enterobacter sakazakii).